We begin with the raw amino-acid sequence, 93 residues long: DNA-directed RNA polymerase subunit omega (93 aa).

The protein belongs to the RNA polymerase subunit omega family. In terms of assembly, the RNAP catalytic core consists of 2 alpha, 1 beta, 1 beta' and 1 omega subunit. When a sigma factor is associated with the core the holoenzyme is formed, which can initiate transcription.

The catalysed reaction is RNA(n) + a ribonucleoside 5'-triphosphate = RNA(n+1) + diphosphate. Functionally, promotes RNA polymerase assembly. Latches the N- and C-terminal regions of the beta' subunit thereby facilitating its interaction with the beta and alpha subunits. This chain is DNA-directed RNA polymerase subunit omega, found in Shewanella piezotolerans (strain WP3 / JCM 13877).